A 561-amino-acid polypeptide reads, in one-letter code: MWIVVFSLLVLTVTFFVYGALRRKAFYKRVDKLEDWKNDILQRPIPDEIGKVKGLTMSGETEEKFEVWRSDWDDIVGVILPNVEEQLFDVEDFANKYRFQKAKALLDTIEQRLHSIEEQLKIMVDDIQVLVQSEEQNRTEIGSVRELQQKLIKEAITRRGSLSSSAKVFDEKLEKANELLQAFDERTEKGNYIQASEVLEEAKELLGQIEHLLKIVPGLFVELQTNIPAELTNLKNGLRDMEEAGFFLETFAIDSQMERLEEKRVELLEQLTVLECNGMEEEINFIEESMEQMFELLEKEVEAKNEITILLPNLREDLTKTEEKLTHLKEETESVQLSYRLAEEELVFQQKLGKELKELRQQLQVIDEVTEEQKQTFSSVRSMLEEWREGLTACQNKIEQAQESLNSLRKDELKAKEELKQLKEKLLEDKRLVQKSNIPGLPETLLHRLEDGEQKLAQAIAKLSDVPLEMGRVTALVDEAQGLIHENSSILHETIEKARLAEHVIQYGNRYRSRSAEVKKRLSNAEELFRAFEYDEAIEMAVQAIEPFEKDVLEKVQHLAG.

The Extracellular segment spans residues 1 to 3 (MWI). A helical membrane pass occupies residues 4–22 (VVFSLLVLTVTFFVYGALR). The Cytoplasmic portion of the chain corresponds to 23 to 561 (RKAFYKRVDK…VLEKVQHLAG (539 aa)). Coiled-coil stretches lie at residues 98 to 130 (RFQKAKALLDTIEQRLHSIEEQLKIMVDDIQVL), 166 to 214 (AKVF…HLLK), and 251 to 465 (FAID…KLSD).

Belongs to the EzrA family.

It localises to the cell membrane. In terms of biological role, negative regulator of FtsZ ring formation; modulates the frequency and position of FtsZ ring formation. Inhibits FtsZ ring formation at polar sites. Interacts either with FtsZ or with one of its binding partners to promote depolymerization. The protein is Septation ring formation regulator EzrA of Halalkalibacterium halodurans (strain ATCC BAA-125 / DSM 18197 / FERM 7344 / JCM 9153 / C-125) (Bacillus halodurans).